The chain runs to 648 residues: Threonine--tRNA ligase (648 aa).

Residues 1–61 (MINITFPDGA…DTDGSIEIVT (61 aa)) form the TGS domain. The tract at residues 242–540 (DHRKLGKELD…LIETYKGAFP (299 aa)) is catalytic. Residues cysteine 336, histidine 387, and histidine 517 each contribute to the Zn(2+) site.

The protein belongs to the class-II aminoacyl-tRNA synthetase family. Homodimer. It depends on Zn(2+) as a cofactor.

The protein resides in the cytoplasm. The catalysed reaction is tRNA(Thr) + L-threonine + ATP = L-threonyl-tRNA(Thr) + AMP + diphosphate + H(+). Functionally, catalyzes the attachment of threonine to tRNA(Thr) in a two-step reaction: L-threonine is first activated by ATP to form Thr-AMP and then transferred to the acceptor end of tRNA(Thr). Also edits incorrectly charged L-seryl-tRNA(Thr). This chain is Threonine--tRNA ligase, found in Streptococcus uberis (strain ATCC BAA-854 / 0140J).